The sequence spans 295 residues: Methionine aminopeptidase (295 aa).

Histidine 62 provides a ligand contact to substrate. A divalent metal cation is bound by residues aspartate 82, aspartate 93, and histidine 153. Histidine 161 contributes to the substrate binding site. A divalent metal cation-binding residues include glutamate 187 and glutamate 280.

The protein belongs to the peptidase M24A family. Methionine aminopeptidase archaeal type 2 subfamily. In terms of assembly, monomer. Co(2+) serves as cofactor. It depends on Zn(2+) as a cofactor. The cofactor is Mn(2+). Requires Fe(2+) as cofactor.

The catalysed reaction is Release of N-terminal amino acids, preferentially methionine, from peptides and arylamides.. Removes the N-terminal methionine from nascent proteins. The N-terminal methionine is often cleaved when the second residue in the primary sequence is small and uncharged (Met-Ala-, Cys, Gly, Pro, Ser, Thr, or Val). The chain is Methionine aminopeptidase from Pyrococcus abyssi (strain GE5 / Orsay).